Here is a 318-residue protein sequence, read N- to C-terminus: Olfactory receptor 13C2 (318 aa).

Residues 1 to 25 (MEWENHTILVEFFLKGLSGHPRLEL) are Extracellular-facing. N-linked (GlcNAc...) asparagine glycosylation is present at asparagine 5. A helical membrane pass occupies residues 26 to 46 (LFFVLIFIMYVVILLGNGTLI). The Cytoplasmic segment spans residues 47 to 54 (LISILDPH). A helical transmembrane segment spans residues 55-75 (LHTPMYFFLGNLSFLDICYTT). The Extracellular segment spans residues 76 to 99 (TSIPSTLVSFLSERKTISLSGCAV). Residues cysteine 97 and cysteine 189 are joined by a disulfide bond. The helical transmembrane segment at 100–120 (QMFLGLAMGTTECVLLGMMAF) threads the bilayer. Topologically, residues 121-139 (DRYVAICNPLRYPIIMSKD) are cytoplasmic. A helical membrane pass occupies residues 140-160 (AYVPMAAGSWIIGAVNSAVQS). Topologically, residues 161–197 (VFVVQLPFCRNNIINHFTCEILAVMKLACADISDNEF) are extracellular. The helical transmembrane segment at 198–217 (IMLVATTLFILTPLLLIIVS) threads the bilayer. Residues 218–237 (YTLIIVSIFKISSSEGRSKA) are Cytoplasmic-facing. Residues 238-258 (SSTCSAHLTVVIIFYGTILFM) form a helical membrane-spanning segment. At 259–277 (YMKPKSKETLNSDDLDATD) the chain is on the extracellular side. The chain crosses the membrane as a helical span at residues 278–298 (KIISMFYGVMTPMMNPLIYSL). At 299 to 318 (RNKDVKEAVKHLLNRRFFSK) the chain is on the cytoplasmic side.

The protein belongs to the G-protein coupled receptor 1 family.

The protein resides in the cell membrane. Odorant receptor. The polypeptide is Olfactory receptor 13C2 (OR13C2) (Homo sapiens (Human)).